The sequence spans 250 residues: tRNA (guanine-N(1)-)-methyltransferase (250 aa).

S-adenosyl-L-methionine is bound by residues Gly-116 and 136–141 (IGDYVL).

The protein belongs to the RNA methyltransferase TrmD family. As to quaternary structure, homodimer.

It is found in the cytoplasm. It carries out the reaction guanosine(37) in tRNA + S-adenosyl-L-methionine = N(1)-methylguanosine(37) in tRNA + S-adenosyl-L-homocysteine + H(+). Specifically methylates guanosine-37 in various tRNAs. In Pseudomonas fluorescens (strain ATCC BAA-477 / NRRL B-23932 / Pf-5), this protein is tRNA (guanine-N(1)-)-methyltransferase.